A 699-amino-acid polypeptide reads, in one-letter code: Elongation factor G (699 aa).

The tr-type G domain maps to 8 to 288 (EDYRNFGIMA…AVVDYLPSPL (281 aa)). GTP-binding positions include 17 to 24 (AHIDAGKT), 86 to 90 (DTPGH), and 140 to 143 (NKMD).

This sequence belongs to the TRAFAC class translation factor GTPase superfamily. Classic translation factor GTPase family. EF-G/EF-2 subfamily.

The protein localises to the cytoplasm. Catalyzes the GTP-dependent ribosomal translocation step during translation elongation. During this step, the ribosome changes from the pre-translocational (PRE) to the post-translocational (POST) state as the newly formed A-site-bound peptidyl-tRNA and P-site-bound deacylated tRNA move to the P and E sites, respectively. Catalyzes the coordinated movement of the two tRNA molecules, the mRNA and conformational changes in the ribosome. In Agrobacterium fabrum (strain C58 / ATCC 33970) (Agrobacterium tumefaciens (strain C58)), this protein is Elongation factor G.